Here is a 160-residue protein sequence, read N- to C-terminus: MSKSGNKNQNCPKCNNSPWIQRANNFIAQNQNVQTGTKEYYQVEAVKYLLNNGHCGIDCRAKISDIIKGINYPKNREAFQHEVLIPLKQYGIIATLVYPGRKGGVFIPCNNDEIKKVAKQVFKRIESELENLEGSATGVQNIKNLANSLKTTVHNLKNTI.

Its function is as follows. May be involved in control of expression of the type II restriction enzyme MjaV and/or its methyltransferase M.MjaV. The protein is Putative control protein C.MjaVP of Methanocaldococcus jannaschii (strain ATCC 43067 / DSM 2661 / JAL-1 / JCM 10045 / NBRC 100440) (Methanococcus jannaschii).